Here is a 258-residue protein sequence, read N- to C-terminus: Heat-labile enterotoxin A chain (258 aa).

The first 18 residues, 1-18, serve as a signal peptide directing secretion; that stretch reads MKNITFIFFILLASPLYA. 25 to 39 provides a ligand contact to NAD(+); sequence RADSRPPDEIKRSGG. The active site involves E130. The cysteines at positions 205 and 217 are disulfide-linked.

The protein belongs to the enterotoxin A family. As to quaternary structure, heterohexamer of one A chain and of five B chains.

The biological activity of the toxin is produced by the A chain, which activates intracellular adenyl cyclase. In Escherichia coli, this protein is Heat-labile enterotoxin A chain (eltA).